Consider the following 637-residue polypeptide: Biosynthetic arginine decarboxylase (637 aa).

The residue at position 101 (K101) is an N6-(pyridoxal phosphate)lysine. Position 286 to 296 (286 to 296) interacts with substrate; it reads FDVGGGLAVDY.

Belongs to the Orn/Lys/Arg decarboxylase class-II family. SpeA subfamily. Requires Mg(2+) as cofactor. The cofactor is pyridoxal 5'-phosphate.

It catalyses the reaction L-arginine + H(+) = agmatine + CO2. It participates in amine and polyamine biosynthesis; agmatine biosynthesis; agmatine from L-arginine: step 1/1. Its function is as follows. Catalyzes the biosynthesis of agmatine from arginine. The polypeptide is Biosynthetic arginine decarboxylase (Shewanella piezotolerans (strain WP3 / JCM 13877)).